A 304-amino-acid chain; its full sequence is Acetylglutamate kinase (304 aa).

Residues 70–71 (GG), arginine 92, and asparagine 185 contribute to the substrate site.

Belongs to the acetylglutamate kinase family. ArgB subfamily.

The protein localises to the cytoplasm. It carries out the reaction N-acetyl-L-glutamate + ATP = N-acetyl-L-glutamyl 5-phosphate + ADP. It functions in the pathway amino-acid biosynthesis; L-arginine biosynthesis; N(2)-acetyl-L-ornithine from L-glutamate: step 2/4. In terms of biological role, catalyzes the ATP-dependent phosphorylation of N-acetyl-L-glutamate. In Paracoccus denitrificans (strain Pd 1222), this protein is Acetylglutamate kinase.